The following is a 95-amino-acid chain: uncharacterized protein (95 aa).

Composition is skewed to basic and acidic residues over residues 1-28 (MRRAEVKRSAHGPADEKAQTGSPRKERC) and 41-53 (DERVPSDPEKGRP). Positions 1–73 (MRRAEVKRSA…RTSRAGSSWQ (73 aa)) are disordered.

This is an uncharacterized protein from Homo sapiens (Human).